A 358-amino-acid chain; its full sequence is Chorismate synthase (358 aa).

Residue arginine 47 participates in NADP(+) binding. FMN contacts are provided by residues 124-126 (RSS), 240-241 (NA), glycine 284, 299-303 (KPVAT), and arginine 325.

This sequence belongs to the chorismate synthase family. Homotetramer. Requires FMNH2 as cofactor.

It carries out the reaction 5-O-(1-carboxyvinyl)-3-phosphoshikimate = chorismate + phosphate. It participates in metabolic intermediate biosynthesis; chorismate biosynthesis; chorismate from D-erythrose 4-phosphate and phosphoenolpyruvate: step 7/7. Functionally, catalyzes the anti-1,4-elimination of the C-3 phosphate and the C-6 proR hydrogen from 5-enolpyruvylshikimate-3-phosphate (EPSP) to yield chorismate, which is the branch point compound that serves as the starting substrate for the three terminal pathways of aromatic amino acid biosynthesis. This reaction introduces a second double bond into the aromatic ring system. This is Chorismate synthase from Bacteroides fragilis (strain YCH46).